The following is a 202-amino-acid chain: Peptidyl-tRNA hydrolase (202 aa).

A tRNA-binding site is contributed by Y17. H22 functions as the Proton acceptor in the catalytic mechanism. F76, N78, and N124 together coordinate tRNA.

The protein belongs to the PTH family. Monomer.

It localises to the cytoplasm. The catalysed reaction is an N-acyl-L-alpha-aminoacyl-tRNA + H2O = an N-acyl-L-amino acid + a tRNA + H(+). Its function is as follows. Hydrolyzes ribosome-free peptidyl-tRNAs (with 1 or more amino acids incorporated), which drop off the ribosome during protein synthesis, or as a result of ribosome stalling. In terms of biological role, catalyzes the release of premature peptidyl moieties from peptidyl-tRNA molecules trapped in stalled 50S ribosomal subunits, and thus maintains levels of free tRNAs and 50S ribosomes. The protein is Peptidyl-tRNA hydrolase of Nitratidesulfovibrio vulgaris (strain DSM 19637 / Miyazaki F) (Desulfovibrio vulgaris).